Reading from the N-terminus, the 865-residue chain is MIKAIIGKIIGTRNDRWIKQYKKQVLTINALEPTYEKMSDVELQNAFEELKKRVRSTEKDLQEKTLLEVLPESFAITREASKRILKMRHFDVQLIGGMVLNDGKIAEMKTGEGKTLVATLAVALNALKGESVYVVTVNDYLAHRDSKEMEPLYHFLGYSVGTITASVRDDDERLEIYSKDIVYGTNNEFGFDYLRDNMKYSLEHKVQKSHAFAIVDEVDSILIDEARTPLIISGPVDRRMENYNKADEVAKSMQVEIDFTIDEKNRAILITEEGIKKAENLFGVDNLYKIENAALSHHLDQALKANYLFFIDKDYIVANNEVVIVDEFTGRLSEGRRFSEGLHQALEAKEGVSIKEESQTLADITFQNYFRMFSKLAGMTGTAQTEATEFLEIYNLEVVSIPTNLAIKRKDLNDLIYKSEKEKFDAVILKIKELHDKGQPVLVGTASIEKSETLHALLKKERIPHTVLNAKQHTKEAEIIKDAGLKGAVTIATNMAGRGVDIKLTDEIKELGGLYIIGTERHESRRIDNQLRGRSGRQGDPGTSQFYLSLEDNLLRIFGSDRIKGVMEKLGLKDGEHIESKLVTRAVENAQKKVENLHFESRKHLLEYDDVANEQRKSVYKFRDELLDASYDIGAKIAENREYALNQIFSKLKAFDHQNLSEEELLGLKNVLKEDFNAHVALEDLEKASPIEKFVAEKLKSDYENKMKVLDSEQRSRIERIVYLQILDNAWREHLYTMDNLKTGINLRGYNQKDPLVEYKKESYNLFLEFIEDIKIEAIKTFSKIQFENEQDSSDAERYLDNFSEEREHESVTYRHEETLDEDLNVAMKAFAKTPKRNEPCPCQSGKKYKDCCAKSGPKKGLFAK.

ATP-binding positions include glutamine 93, 111–115 (GEGKT), and aspartate 501. The Zn(2+) site is built by cysteine 841, cysteine 843, cysteine 852, and cysteine 853.

The protein belongs to the SecA family. In terms of assembly, monomer and homodimer. Part of the essential Sec protein translocation apparatus which comprises SecA, SecYEG and auxiliary proteins SecDF-YajC and YidC. The cofactor is Zn(2+).

It is found in the cell inner membrane. Its subcellular location is the cytoplasm. The catalysed reaction is ATP + H2O + cellular proteinSide 1 = ADP + phosphate + cellular proteinSide 2.. Part of the Sec protein translocase complex. Interacts with the SecYEG preprotein conducting channel. Has a central role in coupling the hydrolysis of ATP to the transfer of proteins into and across the cell membrane, serving as an ATP-driven molecular motor driving the stepwise translocation of polypeptide chains across the membrane. This chain is Protein translocase subunit SecA, found in Helicobacter pylori (strain P12).